A 2424-amino-acid chain; its full sequence is Voltage-dependent P/Q-type calcium channel subunit alpha-1A (2424 aa).

The Cytoplasmic portion of the chain corresponds to 1 to 98; that stretch reads MARFGDEMPA…KYAKKITEWP (98 aa). The I repeat unit spans residues 85–363; that stretch reads NVVRKYAKKI…LVLGVLSGEF (279 aa). The chain crosses the membrane as a helical span at residues 99–117; that stretch reads PFEYMILATIIANCIVLAL. The Extracellular segment spans residues 118 to 135; it reads EQHLPDDDKTPMSERLDD. The chain crosses the membrane as a helical span at residues 136 to 155; the sequence is TEPYFIGIFCFEAGIKIIAL. Residues 156–167 are Cytoplasmic-facing; that stretch reads GFAFHKGSYLRN. Residues 168 to 185 form a helical membrane-spanning segment; that stretch reads GWNVMDFVVVLTGILATV. At 186–190 the chain is on the extracellular side; that stretch reads GTEFD. The helical transmembrane segment at 191–209 threads the bilayer; that stretch reads LRTLRAVRVLRPLKLVSGI. Over 210–228 the chain is Cytoplasmic; it reads PSLQVVLKSIMKAMIPLLQ. Residues 229–248 form a helical membrane-spanning segment; the sequence is IGLLLFFAILIFAIIGLEFY. Residues 249–335 lie on the Extracellular side of the membrane; that stretch reads MGKFHTTCFE…NSNDASGNTW (87 aa). Residue asparagine 283 is glycosylated (N-linked (GlcNAc...) asparagine). Residue glutamate 318 coordinates Ca(2+). A helical transmembrane segment spans residues 336-360; it reads NWLYFIPLIIIGSFFMLNLVLGVLS. The Cytoplasmic segment spans residues 361 to 487; sequence GEFAKERERV…FYIRRMVKTQ (127 aa). The segment at 383-400 is binding to the beta subunit; sequence QQIERELNGYMEWISKAE. Threonine 409 bears the Phosphothreonine mark. Residues serine 448 and serine 451 each carry the phosphoserine modification. The stretch at 473–717 is one II repeat; it reads ERRMRFYIRR…VFLAIAVDNL (245 aa). The helical transmembrane segment at 488 to 506 threads the bilayer; sequence AFYWTVLSLVALNTLCVAI. The Extracellular portion of the chain corresponds to 507-521; the sequence is VHYNQPEWLSDFLYY. The chain crosses the membrane as a helical span at residues 522–541; sequence AEFIFLGLFMSEMFIKMYGL. The Cytoplasmic portion of the chain corresponds to 542 to 549; sequence GTRPYFHS. Residues 550–568 form a helical membrane-spanning segment; it reads SFNCFDCGVIIGSIFEVIW. The Extracellular portion of the chain corresponds to 569-578; it reads AVIKPGTSFG. A helical transmembrane segment spans residues 579–597; sequence ISVLRALRLLRIFKVTKYW. At 598–616 the chain is on the cytoplasmic side; it reads ASLRNLVVSLLNSMKSIIS. The helical transmembrane segment at 617–636 threads the bilayer; sequence LLFLLFLFIVVFALLGMQLF. At 637 to 689 the chain is on the extracellular side; sequence GGQFNFDEGTPPTNFDTFPAAIMTVFQILTGEDWNEVMYDGIKSQGGVQGGMV. Residue glutamate 668 coordinates Ca(2+). A helical transmembrane segment spans residues 690–714; it reads FSIYFIVLTLFGNYTLLNVFLAIAV. Topologically, residues 715 to 1253 are cytoplasmic; that stretch reads DNLANAQELT…RLCHYILNLR (539 aa). Phosphoserine occurs at positions 750, 753, and 790. Residues 819-1229 form a disordered region; the sequence is HLDRPLVVDP…GEDGPKPMPP (411 aa). Composition is skewed to basic and acidic residues over residues 893–912, 922–931, and 969–996; these read ELSREGPYGRESDHQAREGG, EAERGKAGDP, and RPGEDGPDDKAERRGRHREGSRPARSGE. The segment covering 1053-1065 has biased composition (polar residues); sequence PNLSTTRPIQQDL. Phosphoserine is present on residues serine 1091 and serine 1104. Positions 1110–1140 are enriched in low complexity; the sequence is SSTDPAGPTPATAANPQNSTASRRTPNNPGN. The segment covering 1151 to 1168 has biased composition (polar residues); it reads ENSLIVTNPSTAQTNSAK. Over residues 1204–1214 the composition is skewed to basic and acidic residues; sequence LPKKEDEKKEE. One copy of the III repeat lies at 1240–1523; sequence NPLRRLCHYI…IFVALIIITF (284 aa). Residues 1254–1272 form a helical membrane-spanning segment; the sequence is YFEMCILMVIAMSSIALAA. The Extracellular segment spans residues 1273–1288; sequence EDPVQPNAPRNNVLRY. Residues 1289–1308 form a helical membrane-spanning segment; the sequence is FDYVFTGVFTFEMVIKMIDL. The Cytoplasmic portion of the chain corresponds to 1309–1320; the sequence is GLVLHQGAYFRD. A helical membrane pass occupies residues 1321 to 1339; the sequence is LWNILDFIVVSGALVAFAF. Residues 1340–1350 lie on the Extracellular side of the membrane; the sequence is TGNSKGKDINT. A helical membrane pass occupies residues 1351–1369; sequence IKSLRVLRVLRPLKTIKRL. Residues 1370–1388 are Cytoplasmic-facing; sequence PKLKAVFDCVVNSLKNVFN. A helical transmembrane segment spans residues 1389 to 1408; sequence ILIVYMLFMFIFAVVAVQLF. At 1409 to 1495 the chain is on the extracellular side; the sequence is KGKFFHCTDE…QGPSPGYRME (87 aa). A Ca(2+)-binding site is contributed by glutamate 1469. The helical transmembrane segment at 1496 to 1520 threads the bilayer; it reads MSIFYVVYFVVFPFFFVNIFVALII. The Cytoplasmic portion of the chain corresponds to 1521-1575; it reads ITFQEQGDKMMEEYSLEKNERACIDFAISAKPLTRHMPQNKQSFQYRMWQFVVSP. An IV repeat occupies 1560–1823; it reads NKQSFQYRMW…LFVAVIMDNF (264 aa). The chain crosses the membrane as a helical span at residues 1576-1604; it reads PFEYTIMAMIALNTIVLMMKFYGASVAYD. Topologically, residues 1605-1609 are extracellular; sequence NALKV. Residues 1610 to 1629 form a helical membrane-spanning segment; that stretch reads FNIVFTSLFSLECLLKVLAF. Residues 1630 to 1637 lie on the Cytoplasmic side of the membrane; that stretch reads GILNYFRD. The helical transmembrane segment at 1638–1656 threads the bilayer; it reads AWNIFDFVTVLGSITDILV. Residues 1657–1665 are Extracellular-facing; the sequence is TEFGNNFIN. Residue asparagine 1665 is glycosylated (N-linked (GlcNAc...) asparagine). A helical transmembrane segment spans residues 1666–1684; it reads LSFLRLFRAARLIKLLRQG. Topologically, residues 1685–1703 are cytoplasmic; that stretch reads YTIRILLWTFVQSFKALPY. A helical transmembrane segment spans residues 1704 to 1723; the sequence is VCLLIAMLFFIYAIIGMQVF. Residues 1724–1795 lie on the Extracellular side of the membrane; that stretch reads GNIGIDMEDE…ILTPECGNEF (72 aa). The helical transmembrane segment at 1796 to 1820 threads the bilayer; that stretch reads AYFYFVSFIFLCSFLMLNLFVAVIM. At 1821–2424 the chain is on the cytoplasmic side; the sequence is DNFEYLTRDS…GGPRASAPSP (604 aa). Residue threonine 1993 is modified to Phosphothreonine. Positions 1997–2424 are disordered; that stretch reads FQRMEPPPDE…GGPRASAPSP (428 aa). The span at 2037 to 2053 shows a compositional bias: polar residues; sequence SWVTQRAQEMFQKTGTW. Residues serine 2054, serine 2072, serine 2084, serine 2086, serine 2127, and serine 2148 each carry the phosphoserine modification. Over residues 2074-2090 the composition is skewed to basic and acidic residues; it reads EMREMSQDGYSDSEHCL. Basic and acidic residues-rich tracts occupy residues 2142–2159 and 2200–2210; these read RRLDDYSLERVPPEENQR and PSREREQERGR. Positions 2211 to 2229 are enriched in basic residues; that stretch reads PKDRKHRPHHHHHHHHHPG. Residues 2249–2262 are compositionally biased toward low complexity; that stretch reads VARVRPARAPALAH. Basic residues predominate over residues 2280–2305; the sequence is RRARRPRPRQRRRPRRRRGGGGRALR.

This sequence belongs to the calcium channel alpha-1 subunit (TC 1.A.1.11) family. CACNA1A subfamily. In terms of assembly, voltage-dependent calcium channels are multisubunit complexes, consisting of alpha-1, alpha-2, beta and delta subunits in a 1:1:1:1 ratio. The channel activity is directed by the pore-forming and voltage-sensitive alpha-1 subunit. In many cases, this subunit is sufficient to generate voltage-sensitive calcium channel activity. The auxiliary subunits beta and alpha-2/delta linked by a disulfide bridge regulate the channel activity. Interacts with CABP1. Interacts with the spider omega-agatoxin-IVA (AC P30288). Interacts with TSPOAP1. In terms of tissue distribution, brain specific. Purkinje cells contain predominantly P-type VSCC, the Q-type being a prominent calcium current in cerebellar granule cells.

It is found in the cell membrane. It catalyses the reaction Ca(2+)(in) = Ca(2+)(out). In terms of biological role, voltage-sensitive calcium channels (VSCC) mediate the entry of calcium ions into excitable cells and are also involved in a variety of calcium-dependent processes, including muscle contraction, hormone or neurotransmitter release, gene expression, cell motility, cell division and cell death. The isoform alpha-1A gives rise to P and/or Q-type calcium currents. P/Q-type calcium channels belong to the 'high-voltage activated' (HVA) group and are specifically blocked by the spider omega-agatoxin-IVA (AC P54282). They are however insensitive to dihydropyridines (DHP). This Oryctolagus cuniculus (Rabbit) protein is Voltage-dependent P/Q-type calcium channel subunit alpha-1A (CACNA1A).